The primary structure comprises 415 residues: Homoserine O-acetyltransferase (415 aa).

The AB hydrolase-1 domain maps to 47-369 (NAVLVCHGLT…HGHDAFLVEP (323 aa)). Residue S155 is the Nucleophile of the active site. A substrate-binding site is contributed by R226. Active-site residues include D329 and H362. D363 provides a ligand contact to substrate. Residues 387–415 (RAVTDTATDGGEPDEEEDFAPVHSSLFSR) form a disordered region.

This sequence belongs to the AB hydrolase superfamily. MetX family. Homodimer.

The protein resides in the cytoplasm. It catalyses the reaction L-homoserine + acetyl-CoA = O-acetyl-L-homoserine + CoA. Its pathway is amino-acid biosynthesis; L-methionine biosynthesis via de novo pathway; O-acetyl-L-homoserine from L-homoserine: step 1/1. In terms of biological role, transfers an acetyl group from acetyl-CoA to L-homoserine, forming acetyl-L-homoserine. The chain is Homoserine O-acetyltransferase from Haloferax prahovense (strain DSM 18310 / JCM 13924 / TL6).